The primary structure comprises 261 residues: Protein LIKE COV 2 (261 aa).

The segment at 1–38 is disordered; it reads MAEGKEATTSSLSQGLTPHQDPDDAPKSPPNSPNSSTR. Over 1 to 56 the chain is Cytoplasmic; the sequence is MAEGKEATTSSLSQGLTPHQDPDDAPKSPPNSPNSSTRKACYGVLQSWVSKKFMTG. Positions 7–17 are enriched in polar residues; the sequence is ATTSSLSQGLT. The helical transmembrane segment at 57–77 threads the bilayer; the sequence is FVVLFPVAVTFLITWWFIQFV. At 78–91 the chain is on the extracellular side; sequence DGFFSPIYENLGVD. A helical membrane pass occupies residues 92–112; it reads IFGLGFITSVLFTFFVGIFAS. Over 113–261 the chain is Cytoplasmic; that stretch reads SWLGSTVFWL…HSLRVPLNRL (149 aa).

Belongs to the plant COV1 protein family.

Its subcellular location is the membrane. The chain is Protein LIKE COV 2 from Arabidopsis thaliana (Mouse-ear cress).